The primary structure comprises 145 residues: Ribonuclease HI (145 aa).

In terms of domain architecture, RNase H type-1 spans 1 to 142 (MNQTVYLYTD…ADDLANRGAA (142 aa)). Mg(2+) contacts are provided by Asp-10, Glu-48, Asp-70, and Asp-134.

The protein belongs to the RNase H family. In terms of assembly, monomer. It depends on Mg(2+) as a cofactor.

It localises to the cytoplasm. It catalyses the reaction Endonucleolytic cleavage to 5'-phosphomonoester.. Endonuclease that specifically degrades the RNA of RNA-DNA hybrids. This Neisseria meningitidis serogroup A / serotype 4A (strain DSM 15465 / Z2491) protein is Ribonuclease HI.